A 559-amino-acid chain; its full sequence is (R)-mandelonitrile lyase 1 (559 aa).

An N-terminal signal peptide occupies residues 1-27 (MEKSTMSVILFVLHLLVLHLQYSEVHS). Asparagine 30 and asparagine 44 each carry an N-linked (GlcNAc...) asparagine glycan. FAD contacts are provided by residues 63 to 64 (TS), 82 to 83 (ER), threonine 133, and 137 to 140 (NAGV). N-linked (GlcNAc...) asparagine glycosylation is found at asparagine 145, asparagine 162, asparagine 178, and asparagine 218. Valine 244 contacts FAD. Asparagine 252, asparagine 255, asparagine 309, asparagine 380, asparagine 402, asparagine 420, and asparagine 467 each carry an N-linked (GlcNAc...) asparagine glycan. A disulfide bond links cysteine 427 and cysteine 478. Tyrosine 485 is a binding site for substrate. FAD is bound at residue 486–487 (WH). The active-site Proton donor is the histidine 487. Histidine 525 acts as the Proton acceptor in catalysis. 526-527 (PQ) is a binding site for FAD.

The protein belongs to the GMC oxidoreductase family. As to quaternary structure, monomer. FAD is required as a cofactor.

The catalysed reaction is (R)-mandelonitrile = benzaldehyde + hydrogen cyanide. Its function is as follows. Involved in cyanogenesis, the release of HCN from injured tissues. Catalyzes the stereospecific addition of HCN to a variety of aldehydes in vitro. It is a major seed constituent, and could have the additional role of a storage form for reduced nitrogen. In Prunus dulcis (Almond), this protein is (R)-mandelonitrile lyase 1 (MDL1).